The following is a 124-amino-acid chain: Small ribosomal subunit protein uS12 (124 aa).

A 3-methylthioaspartic acid modification is found at Asp89.

The protein belongs to the universal ribosomal protein uS12 family. Part of the 30S ribosomal subunit. Contacts proteins S8 and S17. May interact with IF1 in the 30S initiation complex.

Functionally, with S4 and S5 plays an important role in translational accuracy. Interacts with and stabilizes bases of the 16S rRNA that are involved in tRNA selection in the A site and with the mRNA backbone. Located at the interface of the 30S and 50S subunits, it traverses the body of the 30S subunit contacting proteins on the other side and probably holding the rRNA structure together. The combined cluster of proteins S8, S12 and S17 appears to hold together the shoulder and platform of the 30S subunit. The sequence is that of Small ribosomal subunit protein uS12 from Shewanella halifaxensis (strain HAW-EB4).